Here is a 159-residue protein sequence, read N- to C-terminus: Regulatory protein RecX (159 aa).

It belongs to the RecX family.

It is found in the cytoplasm. In terms of biological role, modulates RecA activity. The sequence is that of Regulatory protein RecX from Ralstonia pickettii (strain 12J).